A 215-amino-acid polypeptide reads, in one-letter code: Imidazole glycerol phosphate synthase subunit HisH (215 aa).

A Glutamine amidotransferase type-1 domain is found at 7–215 (TIAVIDYGMG…LLKNFVEWQP (209 aa)). Cys86 functions as the Nucleophile in the catalytic mechanism. Catalysis depends on residues His195 and Glu197.

Heterodimer of HisH and HisF.

Its subcellular location is the cytoplasm. It carries out the reaction 5-[(5-phospho-1-deoxy-D-ribulos-1-ylimino)methylamino]-1-(5-phospho-beta-D-ribosyl)imidazole-4-carboxamide + L-glutamine = D-erythro-1-(imidazol-4-yl)glycerol 3-phosphate + 5-amino-1-(5-phospho-beta-D-ribosyl)imidazole-4-carboxamide + L-glutamate + H(+). It catalyses the reaction L-glutamine + H2O = L-glutamate + NH4(+). It functions in the pathway amino-acid biosynthesis; L-histidine biosynthesis; L-histidine from 5-phospho-alpha-D-ribose 1-diphosphate: step 5/9. Its function is as follows. IGPS catalyzes the conversion of PRFAR and glutamine to IGP, AICAR and glutamate. The HisH subunit catalyzes the hydrolysis of glutamine to glutamate and ammonia as part of the synthesis of IGP and AICAR. The resulting ammonia molecule is channeled to the active site of HisF. This is Imidazole glycerol phosphate synthase subunit HisH from Dechloromonas aromatica (strain RCB).